Consider the following 239-residue polypeptide: Octanoyltransferase (239 aa).

The BPL/LPL catalytic domain occupies 48–236 (EGGDELVWLV…AFETVFGETV (189 aa)). Substrate contacts are provided by residues 87–94 (RGGEYTYH), 167–169 (ALG), and 180–182 (GLS). The active-site Acyl-thioester intermediate is the cysteine 198.

Belongs to the LipB family.

Its subcellular location is the cytoplasm. It carries out the reaction octanoyl-[ACP] + L-lysyl-[protein] = N(6)-octanoyl-L-lysyl-[protein] + holo-[ACP] + H(+). It participates in protein modification; protein lipoylation via endogenous pathway; protein N(6)-(lipoyl)lysine from octanoyl-[acyl-carrier-protein]: step 1/2. Catalyzes the transfer of endogenously produced octanoic acid from octanoyl-acyl-carrier-protein onto the lipoyl domains of lipoate-dependent enzymes. Lipoyl-ACP can also act as a substrate although octanoyl-ACP is likely to be the physiological substrate. In Rhizobium etli (strain CIAT 652), this protein is Octanoyltransferase.